The primary structure comprises 366 residues: UDP-N-acetylglucosamine--N-acetylmuramyl-(pentapeptide) pyrophosphoryl-undecaprenol N-acetylglucosamine transferase (366 aa).

UDP-N-acetyl-alpha-D-glucosamine is bound by residues 10–12 (TGG), asparagine 124, arginine 166, serine 196, and glutamine 296.

Belongs to the glycosyltransferase 28 family. MurG subfamily.

It is found in the cell membrane. It catalyses the reaction di-trans,octa-cis-undecaprenyl diphospho-N-acetyl-alpha-D-muramoyl-L-alanyl-D-glutamyl-meso-2,6-diaminopimeloyl-D-alanyl-D-alanine + UDP-N-acetyl-alpha-D-glucosamine = di-trans,octa-cis-undecaprenyl diphospho-[N-acetyl-alpha-D-glucosaminyl-(1-&gt;4)]-N-acetyl-alpha-D-muramoyl-L-alanyl-D-glutamyl-meso-2,6-diaminopimeloyl-D-alanyl-D-alanine + UDP + H(+). Its pathway is cell wall biogenesis; peptidoglycan biosynthesis. Its function is as follows. Cell wall formation. Catalyzes the transfer of a GlcNAc subunit on undecaprenyl-pyrophosphoryl-MurNAc-pentapeptide (lipid intermediate I) to form undecaprenyl-pyrophosphoryl-MurNAc-(pentapeptide)GlcNAc (lipid intermediate II). This is UDP-N-acetylglucosamine--N-acetylmuramyl-(pentapeptide) pyrophosphoryl-undecaprenol N-acetylglucosamine transferase from Alkaliphilus oremlandii (strain OhILAs) (Clostridium oremlandii (strain OhILAs)).